The sequence spans 51 residues: Large ribosomal subunit protein eL39y (51 aa).

The tract at residues 1-21 (MPSHKSFMIKKKLGKKMRQNR) is disordered. Residues 7–19 (FMIKKKLGKKMRQ) show a composition bias toward basic residues.

Belongs to the eukaryotic ribosomal protein eL39 family.

In Arabidopsis thaliana (Mouse-ear cress), this protein is Large ribosomal subunit protein eL39y (RPL39B).